A 349-amino-acid chain; its full sequence is Ferredoxin--NADP reductase 3 (349 aa).

FAD is bound by residues Glu34, Lys42, Tyr46, Val86, Ile120, Asp287, and Ser328.

The protein belongs to the ferredoxin--NADP reductase type 2 family. In terms of assembly, homodimer. FAD serves as cofactor.

It carries out the reaction 2 reduced [2Fe-2S]-[ferredoxin] + NADP(+) + H(+) = 2 oxidized [2Fe-2S]-[ferredoxin] + NADPH. The protein is Ferredoxin--NADP reductase 3 of Lysinibacillus sphaericus (strain C3-41).